Reading from the N-terminus, the 180-residue chain is UPF0227 protein YcfP (180 aa).

The protein belongs to the UPF0227 family.

The chain is UPF0227 protein YcfP from Escherichia coli O9:H4 (strain HS).